A 359-amino-acid chain; its full sequence is Fructose-bisphosphate aldolase class 2 (359 aa).

K9 carries the post-translational modification N6-acetyllysine. S62 is a binding site for D-glyceraldehyde 3-phosphate. D110 (proton donor) is an active-site residue. Residues H111, D145, E175, and H227 each contribute to the Zn(2+) site. G228 contacts dihydroxyacetone phosphate. H265 provides a ligand contact to Zn(2+). Dihydroxyacetone phosphate is bound by residues 266–268 (GGS) and 287–290 (NIDT).

Belongs to the class II fructose-bisphosphate aldolase family. As to quaternary structure, homodimer. Zn(2+) serves as cofactor.

The catalysed reaction is beta-D-fructose 1,6-bisphosphate = D-glyceraldehyde 3-phosphate + dihydroxyacetone phosphate. It functions in the pathway carbohydrate degradation; glycolysis; D-glyceraldehyde 3-phosphate and glycerone phosphate from D-glucose: step 4/4. In terms of biological role, catalyzes the aldol condensation of dihydroxyacetone phosphate (DHAP or glycerone-phosphate) with glyceraldehyde 3-phosphate (G3P) to form fructose 1,6-bisphosphate (FBP) in gluconeogenesis and the reverse reaction in glycolysis. The polypeptide is Fructose-bisphosphate aldolase class 2 (fbaA) (Escherichia coli O157:H7).